We begin with the raw amino-acid sequence, 340 residues long: Glutaminyl-peptide cyclotransferase (340 aa).

The signal sequence occupies residues 1–23; it reads MAIGSVVFAAAGLLLLLLPPSHQ. The N-linked (GlcNAc...) asparagine glycan is linked to N42. Alpha-D-mannopyranose-binding residues include R85 and E91. Cysteines 113 and 136 form a disulfide. D131 lines the Zn(2+) pocket. Residues Q151 and R155 each coordinate alpha-D-mannopyranose. An N-linked (GlcNAc...) asparagine glycan is attached at N156. E170 (proton acceptor) is an active-site residue. Position 171 (E171) interacts with Zn(2+). D218 acts as the Proton acceptor in catalysis. Zn(2+) is bound at residue H297. L306 contributes to the alpha-D-mannopyranose binding site.

This sequence belongs to the glutaminyl-peptide cyclotransferase family.

Its subcellular location is the secreted. It carries out the reaction N-terminal L-glutaminyl-[peptide] = N-terminal 5-oxo-L-prolyl-[peptide] + NH4(+). Inhibited by imidazoles (imidazole, benzimidazole, 1-benzylimidazole, 1-methylimidazole, P150/03, N-omega-acetylhistamine and 4-methylimidazole) and cysteamines (cysteamine, N-dimethylcysteamine and N-diethylcysteamine). Partially inhibited by PDB50 1(3,4-dimethoxyphenyl)-3-(3-imidazol-1-ylpropyl)thiourea. Functionally, acts as a glutaminyl-peptide cyclotransferase. Responsible for the biosynthesis of pyroglutamyl peptides. Might be more efficient in the conversion of tri and tetrapeptides in vitro. Might have a relative preference for substrates containing hydrophobic amino acids in vitro. The polypeptide is Glutaminyl-peptide cyclotransferase (Drosophila melanogaster (Fruit fly)).